Reading from the N-terminus, the 381-residue chain is Chymosin (381 aa).

Positions 1-16 (MRCLVVLLAVFALSQG) are cleaved as a signal peptide. The propeptide at 17 to 58 (AEITRIPLYKGKPLRKALKERGLLEDFLQKQQYGVSSEYSGF) is activation peptide. One can recognise a Peptidase A1 domain in the interval 74–378 (YFGKIYLGTP…DRANNLVGLA (305 aa)). D92 is a catalytic residue. 2 disulfide bridges follow: C105–C110 and C265–C269. D274 is an active-site residue. The cysteines at positions 308 and 341 are disulfide-linked.

The protein belongs to the peptidase A1 family. In terms of assembly, monomer.

It catalyses the reaction Broad specificity similar to that of pepsin A. Clots milk by cleavage of a single 104-Ser-Phe-|-Met-Ala-107 bond in kappa-chain of casein.. Its function is as follows. Chymosin is synthesized in the mucosa of the stomach. The enzyme hydrolyzes casein to paracasein. The polypeptide is Chymosin (CYM) (Ovis aries (Sheep)).